We begin with the raw amino-acid sequence, 436 residues long: tRNA-2-methylthio-N(6)-dimethylallyladenosine synthase (436 aa).

The region spanning 5–120 (KKLFIQTLGC…IKDVVDVKGA (116 aa)) is the MTTase N-terminal domain. Cys14, Cys51, Cys83, Cys152, Cys156, and Cys159 together coordinate [4Fe-4S] cluster. The 235-residue stretch at 138–372 (KTNKYRASVN…IELHKRYLEE (235 aa)) folds into the Radical SAM core domain. The region spanning 375-436 (PKLIGETLNI…RTSLKGEVVN (62 aa)) is the TRAM domain.

Belongs to the methylthiotransferase family. MiaB subfamily. As to quaternary structure, monomer. The cofactor is [4Fe-4S] cluster.

It is found in the cytoplasm. It carries out the reaction N(6)-dimethylallyladenosine(37) in tRNA + (sulfur carrier)-SH + AH2 + 2 S-adenosyl-L-methionine = 2-methylsulfanyl-N(6)-dimethylallyladenosine(37) in tRNA + (sulfur carrier)-H + 5'-deoxyadenosine + L-methionine + A + S-adenosyl-L-homocysteine + 2 H(+). Its function is as follows. Catalyzes the methylthiolation of N6-(dimethylallyl)adenosine (i(6)A), leading to the formation of 2-methylthio-N6-(dimethylallyl)adenosine (ms(2)i(6)A) at position 37 in tRNAs that read codons beginning with uridine. The polypeptide is tRNA-2-methylthio-N(6)-dimethylallyladenosine synthase (Aliarcobacter butzleri (strain RM4018) (Arcobacter butzleri)).